A 220-amino-acid polypeptide reads, in one-letter code: Guanylate kinase (220 aa).

In terms of domain architecture, Guanylate kinase-like spans 15 to 194 (GLMLVISSPS…AFEGIEAIVK (180 aa)). 22-29 (SPSGAGKS) serves as a coordination point for ATP.

It belongs to the guanylate kinase family.

It localises to the cytoplasm. The enzyme catalyses GMP + ATP = GDP + ADP. Essential for recycling GMP and indirectly, cGMP. This is Guanylate kinase from Agrobacterium fabrum (strain C58 / ATCC 33970) (Agrobacterium tumefaciens (strain C58)).